The sequence spans 325 residues: DNA-directed RNA polymerase subunit alpha (325 aa).

The tract at residues 1–231 (MQTSLLKPKI…DQLSVFAALE (231 aa)) is alpha N-terminal domain (alpha-NTD). The alpha C-terminal domain (alpha-CTD) stretch occupies residues 246–325 (IDPILLRPVD…ENWPPAGLDK (80 aa)).

The protein belongs to the RNA polymerase alpha chain family. As to quaternary structure, homodimer. The RNAP catalytic core consists of 2 alpha, 1 beta, 1 beta' and 1 omega subunit. When a sigma factor is associated with the core the holoenzyme is formed, which can initiate transcription.

The catalysed reaction is RNA(n) + a ribonucleoside 5'-triphosphate = RNA(n+1) + diphosphate. Functionally, DNA-dependent RNA polymerase catalyzes the transcription of DNA into RNA using the four ribonucleoside triphosphates as substrates. This is DNA-directed RNA polymerase subunit alpha from Burkholderia mallei (strain NCTC 10247).